Consider the following 1166-residue polypeptide: DEAD-box ATP-dependent RNA helicase 42 (1166 aa).

Composition is skewed to basic and acidic residues over residues 1 to 12 (MEVEKSKYRSED) and 21 to 45 (DLKK…EKRR). The interval 1-460 (MEVEKSKYRS…NDDDPSLDED (460 aa)) is disordered. Residues 14-95 (DVVEEEADLK…KDRVKRRSER (82 aa)) are a coiled coil. Positions 59–70 (SEDDYDRDDDEE) are enriched in acidic residues. Basic residues predominate over residues 80–95 (ERRRRDKDRVKRRSER). Over residues 101 to 110 (SEDDVEEEDE) the composition is skewed to acidic residues. Basic and acidic residues predominate over residues 111-206 (RDKRRVNEKE…RERERSREVG (96 aa)). Residues 130–302 (RGKDRKRDRE…KRKKEEAESE (173 aa)) are a coiled coil. A Phosphoserine modification is found at serine 210. The span at 224–314 (EGGERKEKER…GDADGNEPKA (91 aa)) shows a compositional bias: basic and acidic residues. Serine 324 is subject to Phosphoserine. Composition is skewed to basic and acidic residues over residues 344-357 (ETKP…KMVD) and 416-426 (MNGKESGDRPK). The short motif at 529-557 (KFWHQTGLTSKILDTMKKLNYEKPMPIQT) is the Q motif element. The region spanning 560 to 738 (LPIIMSGRDC…RKVLNKPVEI (179 aa)) is the Helicase ATP-binding domain. An ATP-binding site is contributed by 573 to 580 (AKTGSGKT). Positions 686-689 (DEAD) match the DEAD box motif. The Helicase C-terminal domain occupies 749-910 (DITQLVEVRP…PVPDDLKALA (162 aa)).

This sequence belongs to the DEAD box helicase family. DDX46/PRP5 subfamily.

The protein localises to the nucleus. The catalysed reaction is ATP + H2O = ADP + phosphate + H(+). In terms of biological role, helicase required for pre-mRNA splicing, cold-responsive gene regulation and cold tolerance. The chain is DEAD-box ATP-dependent RNA helicase 42 (RH42) from Arabidopsis thaliana (Mouse-ear cress).